A 558-amino-acid polypeptide reads, in one-letter code: Putative ABC transporter ATP-binding protein gbs1680 (558 aa).

ABC transporter domains are found at residues 5 to 246 (IEWK…GIRE) and 295 to 527 (LSVQ…THLK). Residues 39–46 (GPSGSGKS) and 328–335 (GKNGAGKS) contribute to the ATP site.

This sequence belongs to the ABC transporter superfamily.

The protein localises to the cell membrane. In terms of biological role, probably part of an ABC transporter complex. Responsible for energy coupling to the transport system. The protein is Putative ABC transporter ATP-binding protein gbs1680 of Streptococcus agalactiae serotype III (strain NEM316).